The primary structure comprises 32 residues: Delta-conotoxin-like CnVIB (32 aa).

3 cysteine pairs are disulfide-bonded: Cys3–Cys18, Cys10–Cys22, and Cys17–Cys27. A 4-hydroxyproline mark is found at Pro6 and Pro14.

The protein belongs to the conotoxin O1 superfamily. As to expression, expressed by the venom duct.

It is found in the secreted. Functionally, delta-conotoxins bind to site 6 of voltage-gated sodium channels (Nav) and inhibit the inactivation process. This toxin acts on Nav1.4/SCN4A and Nav1.6/SCN8A (EC(50)=2.3 uM). This Conus consors (Singed cone) protein is Delta-conotoxin-like CnVIB.